Consider the following 190-residue polypeptide: Zinc metalloproteinase/disintegrin (190 aa).

The region spanning 1–11 (NHNPECIVNEP) is the Peptidase M12B domain. The Disintegrin domain maps to 19 to 105 (PPVCGNELLE…ECPADVFHKN (87 aa)). Residues valine 21, asparagine 24, leucine 26, glutamate 28, glutamate 31, and aspartate 34 each contribute to the Ca(2+) site. 6 cysteine pairs are disulfide-bonded: cysteine 33-cysteine 51, cysteine 35-cysteine 46, cysteine 45-cysteine 68, cysteine 59-cysteine 65, cysteine 64-cysteine 90, and cysteine 77-cysteine 97. The D/ECD-tripeptide motif lies at 83-85 (ECD). The Ca(2+) site is built by aspartate 85, proline 86, glutamate 88, aspartate 100, and valine 101. Residues 104-190 (KNGQPCLDNY…DNSPGQNGPC (87 aa)) constitute a propeptide that is removed on maturation.

This sequence belongs to the venom metalloproteinase (M12B) family. P-III subfamily. As to quaternary structure, monomer. The cofactor is Zn(2+). In terms of tissue distribution, expressed by the venom gland.

The protein resides in the secreted. In terms of biological role, impairs hemostasis in the envenomed animal. Its function is as follows. Inhibits platelet aggregation induced by ADP, thrombin, platelet-activating factor and collagen. Acts by inhibiting fibrinogen interaction with platelet receptors GPIIb/GPIIIa (ITGA2B/ITGB3). In Gloydius brevicauda (Korean slamosa snake), this protein is Zinc metalloproteinase/disintegrin.